The following is a 347-amino-acid chain: Ferrochelatase (347 aa).

Cys158 is a binding site for [2Fe-2S] cluster. Fe cation is bound by residues His193 and Glu272. Cys332, Cys339, and Cys341 together coordinate [2Fe-2S] cluster.

Belongs to the ferrochelatase family. As to quaternary structure, homodimer. The cofactor is [2Fe-2S] cluster.

It is found in the cytoplasm. It catalyses the reaction heme b + 2 H(+) = protoporphyrin IX + Fe(2+). Its pathway is porphyrin-containing compound metabolism; protoheme biosynthesis; protoheme from protoporphyrin-IX: step 1/1. In terms of biological role, catalyzes the ferrous insertion into protoporphyrin IX. The chain is Ferrochelatase from Caulobacter vibrioides (strain ATCC 19089 / CIP 103742 / CB 15) (Caulobacter crescentus).